A 231-amino-acid chain; its full sequence is Histone H1 (231 aa).

The span at 1–17 shows a compositional bias: low complexity; that stretch reads MSDPAIEVAPVPVASPA. 2 disordered regions span residues 1 to 44 and 124 to 231; these read MSDP…PVSD and TKKV…AKKA. The region spanning 38 to 112 is the H15 domain; sequence THPPVSDMIV…GASGSFKLPA (75 aa). 3 stretches are compositionally biased toward basic residues: residues 145–171, 178–213, and 221–231; these read KVKK…KTTK, PTKK…KAKK, and KAAKKPSAKKA.

This sequence belongs to the histone H1/H5 family.

It is found in the nucleus. It localises to the chromosome. Functionally, histones H1 are necessary for the condensation of nucleosome chains into higher-order structures. The polypeptide is Histone H1 (Chironomus thummi thummi (Midge)).